A 137-amino-acid polypeptide reads, in one-letter code: ATP synthase epsilon chain, chloroplastic (137 aa).

This sequence belongs to the ATPase epsilon chain family. As to quaternary structure, F-type ATPases have 2 components, CF(1) - the catalytic core - and CF(0) - the membrane proton channel. CF(1) has five subunits: alpha(3), beta(3), gamma(1), delta(1), epsilon(1). CF(0) has three main subunits: a, b and c.

The protein resides in the plastid. The protein localises to the chloroplast thylakoid membrane. Its function is as follows. Produces ATP from ADP in the presence of a proton gradient across the membrane. The chain is ATP synthase epsilon chain, chloroplastic from Oryza nivara (Indian wild rice).